A 332-amino-acid polypeptide reads, in one-letter code: Arabinogalactan endo-beta-1,4-galactanase (332 aa).

N111 is a glycosylation site (N-linked (GlcNAc...) asparagine). E135 (proton donor) is an active-site residue. The Nucleophile role is filled by E245.

It belongs to the glycosyl hydrolase 53 family.

The enzyme catalyses The enzyme specifically hydrolyzes (1-&gt;4)-beta-D-galactosidic linkages in type I arabinogalactans.. The chain is Arabinogalactan endo-beta-1,4-galactanase from Thermothelomyces thermophilus (Myceliophthora thermophila).